We begin with the raw amino-acid sequence, 141 residues long: Putative pre-16S rRNA nuclease (141 aa).

Belongs to the YqgF nuclease family.

It is found in the cytoplasm. Functionally, could be a nuclease involved in processing of the 5'-end of pre-16S rRNA. In Clostridioides difficile (strain 630) (Peptoclostridium difficile), this protein is Putative pre-16S rRNA nuclease.